The following is a 115-amino-acid chain: Phosphoribosyl-ATP pyrophosphatase (115 aa).

This sequence belongs to the PRA-PH family.

It localises to the cytoplasm. The catalysed reaction is 1-(5-phospho-beta-D-ribosyl)-ATP + H2O = 1-(5-phospho-beta-D-ribosyl)-5'-AMP + diphosphate + H(+). It participates in amino-acid biosynthesis; L-histidine biosynthesis; L-histidine from 5-phospho-alpha-D-ribose 1-diphosphate: step 2/9. This is Phosphoribosyl-ATP pyrophosphatase from Bordetella bronchiseptica (strain ATCC BAA-588 / NCTC 13252 / RB50) (Alcaligenes bronchisepticus).